Reading from the N-terminus, the 123-residue chain is Methylmalonyl-CoA carboxyltransferase 1.3S subunit (123 aa).

Positions 46 to 123 (GAGAGKAGEG…QGGQGLIKIG (78 aa)) constitute a Biotinyl-binding domain. N6-biotinyllysine is present on Lys89.

Transcarboxylase is composed of three subunits: 1.3S, 5S, and 12S. The core of the enzyme is composed of six 12S subunits. On each side of the core there are three pairs of 5S subunits. Each 5S dimer is attached to the core by two 1.3S subunits. Thus the total number of chains is 30 (6 + 12 + 12).

It catalyses the reaction (S)-methylmalonyl-CoA + pyruvate = propanoyl-CoA + oxaloacetate. Its function is as follows. The biotinyl 1.3S subunit serves as a carboxyl carrier between the substrate-binding sites on the 12S and 5S subunits. The sequence is that of Methylmalonyl-CoA carboxyltransferase 1.3S subunit from Propionibacterium freudenreichii subsp. shermanii.